A 401-amino-acid chain; its full sequence is Tyrosine--tRNA ligase (401 aa).

The short motif at 43–52 (PTAPDLHLGH) is the 'HIGH' region element. The short motif at 227–231 (KMSKS) is the 'KMSKS' region element. An ATP-binding site is contributed by lysine 230. Residues 338–399 (MAIGNVLKEA…GKRRFAKINL (62 aa)) form the S4 RNA-binding domain.

It belongs to the class-I aminoacyl-tRNA synthetase family. TyrS type 2 subfamily. Homodimer.

The protein resides in the cytoplasm. The enzyme catalyses tRNA(Tyr) + L-tyrosine + ATP = L-tyrosyl-tRNA(Tyr) + AMP + diphosphate + H(+). In terms of biological role, catalyzes the attachment of tyrosine to tRNA(Tyr) in a two-step reaction: tyrosine is first activated by ATP to form Tyr-AMP and then transferred to the acceptor end of tRNA(Tyr). The chain is Tyrosine--tRNA ligase from Idiomarina loihiensis (strain ATCC BAA-735 / DSM 15497 / L2-TR).